The chain runs to 207 residues: Peptidyl-tRNA hydrolase (207 aa).

Tyr14 contacts tRNA. The active-site Proton acceptor is the His19. Residues Tyr64, Asn66, and Asn112 each contribute to the tRNA site.

Belongs to the PTH family. As to quaternary structure, monomer.

The protein resides in the cytoplasm. The enzyme catalyses an N-acyl-L-alpha-aminoacyl-tRNA + H2O = an N-acyl-L-amino acid + a tRNA + H(+). Its function is as follows. Hydrolyzes ribosome-free peptidyl-tRNAs (with 1 or more amino acids incorporated), which drop off the ribosome during protein synthesis, or as a result of ribosome stalling. Catalyzes the release of premature peptidyl moieties from peptidyl-tRNA molecules trapped in stalled 50S ribosomal subunits, and thus maintains levels of free tRNAs and 50S ribosomes. The sequence is that of Peptidyl-tRNA hydrolase from Rhodopseudomonas palustris (strain HaA2).